The sequence spans 283 residues: Pantothenate synthetase (283 aa).

30 to 37 (MGALHEGH) contributes to the ATP binding site. The active-site Proton donor is the histidine 37. Glutamine 61 provides a ligand contact to (R)-pantoate. Glutamine 61 contributes to the beta-alanine binding site. Position 149 to 152 (149 to 152 (GEKD)) interacts with ATP. Glutamine 155 lines the (R)-pantoate pocket. Residues leucine 178 and 186 to 189 (RSSR) each bind ATP.

This sequence belongs to the pantothenate synthetase family. Homodimer.

The protein resides in the cytoplasm. It carries out the reaction (R)-pantoate + beta-alanine + ATP = (R)-pantothenate + AMP + diphosphate + H(+). The protein operates within cofactor biosynthesis; (R)-pantothenate biosynthesis; (R)-pantothenate from (R)-pantoate and beta-alanine: step 1/1. Catalyzes the condensation of pantoate with beta-alanine in an ATP-dependent reaction via a pantoyl-adenylate intermediate. This Christiangramia forsetii (strain DSM 17595 / CGMCC 1.15422 / KT0803) (Gramella forsetii) protein is Pantothenate synthetase.